Here is a 260-residue protein sequence, read N- to C-terminus: Small ribosomal subunit protein uS2 (260 aa).

Belongs to the universal ribosomal protein uS2 family.

This is Small ribosomal subunit protein uS2 from Streptococcus sanguinis (strain SK36).